The sequence spans 184 residues: ATP-dependent protease subunit HslV (184 aa).

T11 is a catalytic residue. Na(+)-binding residues include A165, C168, and T171.

This sequence belongs to the peptidase T1B family. HslV subfamily. As to quaternary structure, a double ring-shaped homohexamer of HslV is capped on each side by a ring-shaped HslU homohexamer. The assembly of the HslU/HslV complex is dependent on binding of ATP.

Its subcellular location is the cytoplasm. The enzyme catalyses ATP-dependent cleavage of peptide bonds with broad specificity.. With respect to regulation, allosterically activated by HslU binding. In terms of biological role, protease subunit of a proteasome-like degradation complex believed to be a general protein degrading machinery. The chain is ATP-dependent protease subunit HslV from Zymomonas mobilis subsp. mobilis (strain ATCC 31821 / ZM4 / CP4).